We begin with the raw amino-acid sequence, 412 residues long: Isocitrate dehydrogenase [NADP] cytoplasmic (412 aa).

NADP(+)-binding positions include 75–77 and Arg82; that span reads TIT. Residue Thr77 coordinates substrate. Substrate is bound by residues 94–100, Arg109, and Arg132; that span reads SPNGTIR. Mn(2+) is bound at residue Asp252. An NADP(+)-binding site is contributed by Lys260. Asp275 contributes to the Mn(2+) binding site. Residues 310–315 and Asn328 contribute to the NADP(+) site; that span reads GTVTRH.

The protein belongs to the isocitrate and isopropylmalate dehydrogenases family. In terms of assembly, homodimer. Mg(2+) serves as cofactor. Requires Mn(2+) as cofactor. Post-translationally, the N-terminus is blocked.

The protein localises to the cytoplasm. It carries out the reaction D-threo-isocitrate + NADP(+) = 2-oxoglutarate + CO2 + NADPH. By catabolite repression. In terms of biological role, may function in the production of NADPH for fatty acid and sterol synthesis. This is Isocitrate dehydrogenase [NADP] cytoplasmic (IDP2) from Saccharomyces cerevisiae (strain ATCC 204508 / S288c) (Baker's yeast).